A 251-amino-acid polypeptide reads, in one-letter code: Ubiquinone/menaquinone biosynthesis C-methyltransferase UbiE (251 aa).

S-adenosyl-L-methionine is bound by residues threonine 74, aspartate 95, and 123 to 124 (NA).

The protein belongs to the class I-like SAM-binding methyltransferase superfamily. MenG/UbiE family.

It carries out the reaction a 2-demethylmenaquinol + S-adenosyl-L-methionine = a menaquinol + S-adenosyl-L-homocysteine + H(+). The enzyme catalyses a 2-methoxy-6-(all-trans-polyprenyl)benzene-1,4-diol + S-adenosyl-L-methionine = a 5-methoxy-2-methyl-3-(all-trans-polyprenyl)benzene-1,4-diol + S-adenosyl-L-homocysteine + H(+). It functions in the pathway quinol/quinone metabolism; menaquinone biosynthesis; menaquinol from 1,4-dihydroxy-2-naphthoate: step 2/2. It participates in cofactor biosynthesis; ubiquinone biosynthesis. Methyltransferase required for the conversion of demethylmenaquinol (DMKH2) to menaquinol (MKH2) and the conversion of 2-polyprenyl-6-methoxy-1,4-benzoquinol (DDMQH2) to 2-polyprenyl-3-methyl-6-methoxy-1,4-benzoquinol (DMQH2). The polypeptide is Ubiquinone/menaquinone biosynthesis C-methyltransferase UbiE (Shewanella oneidensis (strain ATCC 700550 / JCM 31522 / CIP 106686 / LMG 19005 / NCIMB 14063 / MR-1)).